The chain runs to 284 residues: Pantothenate synthetase (284 aa).

30–37 is a binding site for ATP; the sequence is MGNLHQGH. The active-site Proton donor is His-37. Gln-61 is a binding site for (R)-pantoate. Gln-61 is a beta-alanine binding site. Residue 149–152 participates in ATP binding; that stretch reads GQKD. Gln-155 provides a ligand contact to (R)-pantoate. Residues Val-178 and 186–189 each bind ATP; that span reads LSSR.

This sequence belongs to the pantothenate synthetase family. In terms of assembly, homodimer.

The protein localises to the cytoplasm. It catalyses the reaction (R)-pantoate + beta-alanine + ATP = (R)-pantothenate + AMP + diphosphate + H(+). The protein operates within cofactor biosynthesis; (R)-pantothenate biosynthesis; (R)-pantothenate from (R)-pantoate and beta-alanine: step 1/1. Functionally, catalyzes the condensation of pantoate with beta-alanine in an ATP-dependent reaction via a pantoyl-adenylate intermediate. This Aeromonas salmonicida (strain A449) protein is Pantothenate synthetase.